The sequence spans 361 residues: sn-glycerol-3-phosphate import ATP-binding protein UgpC (361 aa).

One can recognise an ABC transporter domain in the interval 4–235 (LSLKGIRKSY…PETVFVAGFI (232 aa)). 37-44 (GPSGCGKS) contacts ATP.

It belongs to the ABC transporter superfamily. sn-glycerol-3-phosphate importer (TC 3.A.1.1.3) family. In terms of assembly, the complex is composed of two ATP-binding proteins (UgpC), two transmembrane proteins (UgpA and UgpE) and a solute-binding protein (UgpB).

It localises to the cell inner membrane. The enzyme catalyses sn-glycerol 3-phosphate(out) + ATP + H2O = sn-glycerol 3-phosphate(in) + ADP + phosphate + H(+). Part of the ABC transporter complex UgpBAEC involved in sn-glycerol-3-phosphate (G3P) import. Responsible for energy coupling to the transport system. The sequence is that of sn-glycerol-3-phosphate import ATP-binding protein UgpC from Burkholderia ambifaria (strain ATCC BAA-244 / DSM 16087 / CCUG 44356 / LMG 19182 / AMMD) (Burkholderia cepacia (strain AMMD)).